A 226-amino-acid chain; its full sequence is Ribose-5-phosphate isomerase A (226 aa).

Substrate-binding positions include 33–36 (TGST), 86–89 (DGAD), and 99–102 (KGGG). The active-site Proton acceptor is the E108. Residue K126 participates in substrate binding.

Belongs to the ribose 5-phosphate isomerase family. As to quaternary structure, homodimer.

The catalysed reaction is aldehydo-D-ribose 5-phosphate = D-ribulose 5-phosphate. It functions in the pathway carbohydrate degradation; pentose phosphate pathway; D-ribose 5-phosphate from D-ribulose 5-phosphate (non-oxidative stage): step 1/1. Catalyzes the reversible conversion of ribose-5-phosphate to ribulose 5-phosphate. This chain is Ribose-5-phosphate isomerase A, found in Bordetella bronchiseptica (strain ATCC BAA-588 / NCTC 13252 / RB50) (Alcaligenes bronchisepticus).